Consider the following 579-residue polypeptide: Carboxysome shell carbonic anhydrase (579 aa).

The segment at 72–95 (GGGRVRSARDQRQPGWVRRDKGAT) is disordered. Over residues 78 to 93 (SARDQRQPGWVRRDKG) the composition is skewed to basic and acidic residues. Cys240 contributes to the Zn(2+) binding site. Catalysis depends on Asp242, which acts as the Proton acceptor. Zn(2+) is bound by residues His308 and Cys319.

This sequence belongs to the beta-class carbonic anhydrase family. CsoSCA subfamily. Homodimer. Zn(2+) serves as cofactor.

It is found in the carboxysome. It carries out the reaction hydrogencarbonate + H(+) = CO2 + H2O. Inhibited by dithiothreitol, partially inhibited by acetatzolamide and cyanide. Functionally, reversible hydration of carbon dioxide. Essential for photosynthetic carbon dioxide fixation, supplies CO(2) to RuBisCO (ribulose bisphosphate carboxylase, cbbL-cbbS) in the carboxysome. The sequence is that of Carboxysome shell carbonic anhydrase from Parasynechococcus marenigrum (strain WH8102).